Reading from the N-terminus, the 342-residue chain is Transmembrane protein 115 homolog (342 aa).

At 1–21 (MQYSSRFLELNIPDSFLNINK) the chain is on the cytoplasmic side. A helical membrane pass occupies residues 22-42 (IPDATKFITVTYICLTATLFC). At 43–121 (IRRSLYNKLV…NWNSSKEMFK (79 aa)) the chain is on the lumenal side. Residue Asn114 is glycosylated (N-linked (GlcNAc...) asparagine). Residues 122-142 (FIIVLGSLTNVLIIMLTLLVS) traverse the membrane as a helical segment. Over 143–159 (FFSNKVRLDIPLDGNYT) the chain is Cytoplasmic. A helical membrane pass occupies residues 160–180 (ILIGFPIIYRQLLPETTIIHL). At 181 to 207 (KTPQFLAKNFRFKLLPIFVMFTMTVTQ) the chain is on the lumenal side. Residues 208–228 (IIWFHHFAQLFSIWVTFFASW) traverse the membrane as a helical segment. The Cytoplasmic segment spans residues 229-342 (SYLRFFQKLA…QVLEERMVNP (114 aa)).

The protein belongs to the TMEM115 family. In terms of assembly, homooligomer.

The protein localises to the golgi apparatus membrane. May play a role in retrograde transport of proteins from the Golgi to the endoplasmic reticulum. The polypeptide is Transmembrane protein 115 homolog (Saccharomyces cerevisiae (strain ATCC 204508 / S288c) (Baker's yeast)).